Here is a 371-residue protein sequence, read N- to C-terminus: tRNA-specific 2-thiouridylase MnmA (371 aa).

ATP is bound by residues 7 to 14 and methionine 33; that span reads GLSGGVDS. Positions 103–105 are interaction with target base in tRNA; the sequence is NPD. Cysteine 108 functions as the Nucleophile in the catalytic mechanism. Residues cysteine 108 and cysteine 201 are joined by a disulfide bond. Glycine 133 serves as a coordination point for ATP. The segment at 151–153 is interaction with tRNA; sequence KDQ. Cysteine 201 acts as the Cysteine persulfide intermediate in catalysis. An interaction with tRNA region spans residues 308 to 309; it reads RY.

This sequence belongs to the MnmA/TRMU family.

Its subcellular location is the cytoplasm. The catalysed reaction is S-sulfanyl-L-cysteinyl-[protein] + uridine(34) in tRNA + AH2 + ATP = 2-thiouridine(34) in tRNA + L-cysteinyl-[protein] + A + AMP + diphosphate + H(+). In terms of biological role, catalyzes the 2-thiolation of uridine at the wobble position (U34) of tRNA, leading to the formation of s(2)U34. This is tRNA-specific 2-thiouridylase MnmA from Mycoplasmopsis pulmonis (strain UAB CTIP) (Mycoplasma pulmonis).